The chain runs to 274 residues: Small nuclear ribonucleoprotein-associated protein B (274 aa).

A Sm domain is found at 5 to 85 (PKSSKMLQYI…VVSMSVEAPP (81 aa)). The segment at 148–274 (PGGGVPPPMG…PMGRGGFQRK (127 aa)) is disordered. Repeat 1 spans residues 162–171 (PPQGFPPGGP). Positions 162-265 (PPQGFPPGGP…PPQGFPPGGP (104 aa)) are 6 X 10 AA repeats of P-P-Q-G-F-P-P-G-G-P. A compositionally biased stretch (low complexity) spans 173-187 (PQGAFNNNPNNNNGG). 5 repeat units span residues 188–197 (PPQGFPPGGP), 204–213 (PPQGFPPGGP), 225–234 (PPQGFPPGGP), 241–250 (PPQGFPPGGP), and 256–265 (PPQGFPPGGP). The segment covering 216 to 226 (GPNLNNGNMPP) has biased composition (low complexity). Residues 265-274 (PMGRGGFQRK) are compositionally biased toward gly residues.

The protein belongs to the snRNP SmB/SmN family.

It is found in the cytoplasm. The protein localises to the cytosol. It localises to the nucleus. Plays a role in pre-mRNA splicing as a core component of the spliceosomal U1, U2, U4 and U5 small nuclear ribonucleoproteins (snRNPs), the building blocks of the spliceosome. This chain is Small nuclear ribonucleoprotein-associated protein B (snrpb), found in Dictyostelium discoideum (Social amoeba).